A 433-amino-acid chain; its full sequence is Enolase (433 aa).

Residue glutamine 167 coordinates (2R)-2-phosphoglycerate. Glutamate 209 serves as the catalytic Proton donor. Residues aspartate 246, glutamate 291, and aspartate 318 each contribute to the Mg(2+) site. Positions 343, 372, 373, and 394 each coordinate (2R)-2-phosphoglycerate. Lysine 343 acts as the Proton acceptor in catalysis.

The protein belongs to the enolase family. Component of the RNA degradosome, a multiprotein complex involved in RNA processing and mRNA degradation. Mg(2+) serves as cofactor.

Its subcellular location is the cytoplasm. The protein localises to the secreted. It is found in the cell surface. The enzyme catalyses (2R)-2-phosphoglycerate = phosphoenolpyruvate + H2O. It functions in the pathway carbohydrate degradation; glycolysis; pyruvate from D-glyceraldehyde 3-phosphate: step 4/5. Functionally, catalyzes the reversible conversion of 2-phosphoglycerate (2-PG) into phosphoenolpyruvate (PEP). It is essential for the degradation of carbohydrates via glycolysis. The chain is Enolase from Actinobacillus succinogenes (strain ATCC 55618 / DSM 22257 / CCUG 43843 / 130Z).